The sequence spans 245 residues: 1-(5-phosphoribosyl)-5-[(5-phosphoribosylamino)methylideneamino] imidazole-4-carboxamide isomerase (245 aa).

Asp7 functions as the Proton acceptor in the catalytic mechanism. Asp129 serves as the catalytic Proton donor.

Belongs to the HisA/HisF family.

The protein localises to the cytoplasm. It catalyses the reaction 1-(5-phospho-beta-D-ribosyl)-5-[(5-phospho-beta-D-ribosylamino)methylideneamino]imidazole-4-carboxamide = 5-[(5-phospho-1-deoxy-D-ribulos-1-ylimino)methylamino]-1-(5-phospho-beta-D-ribosyl)imidazole-4-carboxamide. The protein operates within amino-acid biosynthesis; L-histidine biosynthesis; L-histidine from 5-phospho-alpha-D-ribose 1-diphosphate: step 4/9. The chain is 1-(5-phosphoribosyl)-5-[(5-phosphoribosylamino)methylideneamino] imidazole-4-carboxamide isomerase from Tolumonas auensis (strain DSM 9187 / NBRC 110442 / TA 4).